We begin with the raw amino-acid sequence, 839 residues long: A disintegrin and metalloproteinase with thrombospondin motifs 4 (839 aa).

An N-terminal signal peptide occupies residues 1 to 51 (MSHMDSHPGRGLADGWLWGIQPRLLLPTVPVSGSRLVWLLLLASLLPSAWP). A propeptide spanning residues 52–212 (ASPLPREEEI…PSPSPRRAKR (161 aa)) is cleaved from the precursor. Asn68 is a glycosylation site (N-linked (GlcNAc...) asparagine). The tract at residues 166–209 (EGGAPNSAGGPGAHILRRKSPVSGQGPMCNVKAPPGKPSPSPRR) is disordered. A Cysteine switch motif is present at residues 192–199 (PMCNVKAP). Cys194 provides a ligand contact to Zn(2+). Positions 218–428 (RFVETLVVAD…GFGHCLLDKP (211 aa)) constitute a Peptidase M12B domain. 11 disulfide bridges follow: Cys293–Cys345, Cys322–Cys327, Cys339–Cys423, Cys377–Cys407, Cys449–Cys472, Cys460–Cys482, Cys467–Cys501, Cys495–Cys506, Cys532–Cys569, Cys536–Cys574, and Cys547–Cys559. Zn(2+) is bound at residue His361. The active site involves Glu362. Zn(2+)-binding residues include His365 and His371. Residues 437–519 (TFPGKDYDAD…DQLQAFNVPQ (83 aa)) enclose the Disintegrin domain. Residues 520–575 (AGGWGPWGSWGDCSRSCGGGVQFSSRDCTRPVPRNGGKYCEGRRTRFRSCNTQDCP) form the TSP type-1 domain. Residues 686 to 839 (SKQSGSFKKF…LRRRSWAGRK (154 aa)) are spacer.

In terms of assembly, interacts with SRPX2. The cofactor is Zn(2+). In terms of processing, the precursor is cleaved by a furin endopeptidase. Glycosylated. Can be O-fucosylated by POFUT2 on a serine or a threonine residue found within the consensus sequence C1-X(2)-(S/T)-C2-G of the TSP type-1 repeat domains where C1 and C2 are the first and second cysteine residue of the repeat, respectively. Fucosylated repeats can then be further glycosylated by the addition of a beta-1,3-glucose residue by the glucosyltransferase, B3GALTL. Fucosylation mediates the efficient secretion of ADAMTS family members. Can also be C-glycosylated with one or two mannose molecules on tryptophan residues within the consensus sequence W-X-X-W of the TPRs, and N-glycosylated. These other glycosylations can also facilitate secretion.

Its subcellular location is the secreted. It localises to the extracellular space. It is found in the extracellular matrix. It carries out the reaction Glutamyl endopeptidase. Bonds cleaved include 370-Thr-Glu-Gly-Glu-|-Ala-Arg-Gly-Ser-377 in the interglobular domain of mammalian aggrecan.. Cleaves aggrecan, a cartilage proteoglycan, at the '392-Glu-|-Ala-393' site and may be involved in its turnover. Also cleaves COMP. May play an important role in the destruction of aggrecan in arthritic diseases. In Bos taurus (Bovine), this protein is A disintegrin and metalloproteinase with thrombospondin motifs 4 (ADAMTS4).